The following is a 97-amino-acid chain: MGPQHLLALVVVSILVAAGNAYYEIDDDSVTRALRPSVIADQEHAVHAIPATNFISKDEDHSKNEKKEIEIIRIAIFSLLVVGVFAIMALRCLPFCL.

The first 21 residues, 1-21 (MGPQHLLALVVVSILVAAGNA), serve as a signal peptide directing secretion. The RxLR-dEER signature appears at 32-60 (RALRPSVIADQEHAVHAIPATNFISKDED). Residues 69–89 (IEIIRIAIFSLLVVGVFAIMA) traverse the membrane as a helical segment.

Belongs to the RxLR effector family. As to quaternary structure, interacts with host transcription factor NAC069.

The protein localises to the secreted. It localises to the host endoplasmic reticulum membrane. In terms of biological role, secreted effector that inhibits stress-induced relocalization of the transcription factor NAC069 to the nucleus, thus affecting its broad role in abiotic and biotic stress responses. This is Secreted RxLR effector protein BLR05 from Bremia lactucae (Lettuce downy mildew).